A 699-amino-acid chain; its full sequence is Elongation factor G (699 aa).

A tr-type G domain is found at Glu8–Ile283. Residues Ala17–Thr24, Asp81–His85, and Asn135–Asp138 contribute to the GTP site.

The protein belongs to the TRAFAC class translation factor GTPase superfamily. Classic translation factor GTPase family. EF-G/EF-2 subfamily.

It is found in the cytoplasm. Its function is as follows. Catalyzes the GTP-dependent ribosomal translocation step during translation elongation. During this step, the ribosome changes from the pre-translocational (PRE) to the post-translocational (POST) state as the newly formed A-site-bound peptidyl-tRNA and P-site-bound deacylated tRNA move to the P and E sites, respectively. Catalyzes the coordinated movement of the two tRNA molecules, the mRNA and conformational changes in the ribosome. The sequence is that of Elongation factor G from Rickettsia parkeri.